We begin with the raw amino-acid sequence, 286 residues long: Probable glucose uptake protein GlcU (286 aa).

Helical transmembrane passes span 4-22, 27-49, 53-72, 85-107, 111-133, 154-176, 181-198, 211-228, 233-255, and 267-284; these read IFLA…LFNV, GPYS…VYIF, VLTP…WALG, VSRT…GVIV, WSTT…GVIL, IVIL…LFNV, ALLP…LLTF, IIPG…FISQ, VATS…ILIL, and IVVG…LGIA.

The protein belongs to the GRP transporter (TC 2.A.7.5) family.

It is found in the cell membrane. Its function is as follows. Involved in the uptake of glucose. The polypeptide is Probable glucose uptake protein GlcU (glcU) (Bacillus cereus (strain ATCC 14579 / DSM 31 / CCUG 7414 / JCM 2152 / NBRC 15305 / NCIMB 9373 / NCTC 2599 / NRRL B-3711)).